The primary structure comprises 94 residues: Small ribosomal subunit protein bS6 (94 aa).

This sequence belongs to the bacterial ribosomal protein bS6 family.

Functionally, binds together with bS18 to 16S ribosomal RNA. This chain is Small ribosomal subunit protein bS6, found in Phytoplasma mali (strain AT).